A 744-amino-acid polypeptide reads, in one-letter code: Cell division cycle protein 27 homolog B (744 aa).

A TPR 1 repeat occupies 101–134 (AAGHYLLGLIYKYTDRRKNAAQQFKQSLTIDPLL). Polar residues predominate over residues 180-199 (NEERNSTSTKNTSSEDYSPR). 2 disordered regions span residues 180 to 218 (NEER…NFHS) and 359 to 390 (ENMD…NDQE). Positions 363–374 (EGVRGEPFDDSR) are enriched in basic and acidic residues. Residues 375-387 (PNTASTTGSMASN) show a composition bias toward polar residues. TPR repeat units lie at residues 450–483 (GWVL…SPYC), 518–551 (PQSW…NPRF), 553–585 (YAHT…DTRH), 587–619 (NAWY…NPSS), 621–653 (VIMS…DRKN), 655–687 (LPMY…APSE), and 688–721 (SSVY…KPPA).

This sequence belongs to the APC3/CDC27 family. As to quaternary structure, the APC/C is composed of at least 10 subunits. Can homodimerize. Interacts with APC2, APC10, FZR2 and FZR3. Interacts with PANS1. Interacts with SAMBA. Specifically expressed in dividing and elongating cells.

It localises to the nucleus. It participates in protein modification; protein ubiquitination. Its function is as follows. Component of the anaphase promoting complex/cyclosome (APC/C), a cell cycle-regulated E3 ubiquitin-protein ligase complex that controls progression through mitosis and the G1 phase of the cell cycle. The APC/C complex controls several key steps in the cell cycle by mediating ubiquitination and subsequent degradation of target proteins such as cyclins. The APC/C complex is required for the female gametophyte development and is involved in several aspect of development by controlling cell division and cell elongation. Involved in the control of endoreduplication. Functionally redundant with CDC27A in the control of gametophyte development. In Arabidopsis thaliana (Mouse-ear cress), this protein is Cell division cycle protein 27 homolog B (CDC27B).